The primary structure comprises 312 residues: Acetyl-coenzyme A carboxylase carboxyl transferase subunit alpha (312 aa).

In terms of domain architecture, CoA carboxyltransferase C-terminal spans N36–E286.

It belongs to the AccA family. As to quaternary structure, acetyl-CoA carboxylase is a heterohexamer composed of biotin carboxyl carrier protein (AccB), biotin carboxylase (AccC) and two subunits each of ACCase subunit alpha (AccA) and ACCase subunit beta (AccD).

It is found in the cytoplasm. The enzyme catalyses N(6)-carboxybiotinyl-L-lysyl-[protein] + acetyl-CoA = N(6)-biotinyl-L-lysyl-[protein] + malonyl-CoA. Its pathway is lipid metabolism; malonyl-CoA biosynthesis; malonyl-CoA from acetyl-CoA: step 1/1. Component of the acetyl coenzyme A carboxylase (ACC) complex. First, biotin carboxylase catalyzes the carboxylation of biotin on its carrier protein (BCCP) and then the CO(2) group is transferred by the carboxyltransferase to acetyl-CoA to form malonyl-CoA. This is Acetyl-coenzyme A carboxylase carboxyl transferase subunit alpha from Campylobacter jejuni subsp. jejuni serotype O:6 (strain 81116 / NCTC 11828).